A 252-amino-acid polypeptide reads, in one-letter code: Glucosamine-6-phosphate deaminase (252 aa).

The Proton acceptor; for enolization step role is filled by Asp-64. Asn-130 (for ring-opening step) is an active-site residue. The Proton acceptor; for ring-opening step role is filled by His-132. The active-site For ring-opening step is Glu-137.

It belongs to the glucosamine/galactosamine-6-phosphate isomerase family. NagB subfamily.

The enzyme catalyses alpha-D-glucosamine 6-phosphate + H2O = beta-D-fructose 6-phosphate + NH4(+). It functions in the pathway amino-sugar metabolism; N-acetylneuraminate degradation; D-fructose 6-phosphate from N-acetylneuraminate: step 5/5. Catalyzes the reversible isomerization-deamination of glucosamine 6-phosphate (GlcN6P) to form fructose 6-phosphate (Fru6P) and ammonium ion. The chain is Glucosamine-6-phosphate deaminase from Exiguobacterium sibiricum (strain DSM 17290 / CCUG 55495 / CIP 109462 / JCM 13490 / 255-15).